Here is a 485-residue protein sequence, read N- to C-terminus: N-succinylglutamate 5-semialdehyde dehydrogenase 2 (485 aa).

221 to 226 serves as a coordination point for NAD(+); the sequence is GSAAAG. Catalysis depends on residues glutamate 244 and cysteine 279.

It belongs to the aldehyde dehydrogenase family. AstD subfamily.

The catalysed reaction is N-succinyl-L-glutamate 5-semialdehyde + NAD(+) + H2O = N-succinyl-L-glutamate + NADH + 2 H(+). Its pathway is amino-acid degradation; L-arginine degradation via AST pathway; L-glutamate and succinate from L-arginine: step 4/5. Functionally, catalyzes the NAD-dependent reduction of succinylglutamate semialdehyde into succinylglutamate. The protein is N-succinylglutamate 5-semialdehyde dehydrogenase 2 of Caulobacter vibrioides (strain ATCC 19089 / CIP 103742 / CB 15) (Caulobacter crescentus).